We begin with the raw amino-acid sequence, 349 residues long: Nicotinate-nucleotide--dimethylbenzimidazole phosphoribosyltransferase (349 aa).

Glu-318 (proton acceptor) is an active-site residue.

The protein belongs to the CobT family.

The catalysed reaction is 5,6-dimethylbenzimidazole + nicotinate beta-D-ribonucleotide = alpha-ribazole 5'-phosphate + nicotinate + H(+). It participates in nucleoside biosynthesis; alpha-ribazole biosynthesis; alpha-ribazole from 5,6-dimethylbenzimidazole: step 1/2. In terms of biological role, catalyzes the synthesis of alpha-ribazole-5'-phosphate from nicotinate mononucleotide (NAMN) and 5,6-dimethylbenzimidazole (DMB). This Alkaliphilus metalliredigens (strain QYMF) protein is Nicotinate-nucleotide--dimethylbenzimidazole phosphoribosyltransferase.